Reading from the N-terminus, the 226-residue chain is Ribonuclease 3 (226 aa).

An RNase III domain is found at 7–129; the sequence is LPRLCRTLGY…IIGAVYLDAD (123 aa). Residue glutamate 42 participates in Mg(2+) binding. Aspartate 46 is a catalytic residue. Residues aspartate 115 and glutamate 118 each contribute to the Mg(2+) site. Residue glutamate 118 is part of the active site. The DRBM domain occupies 156-226; the sequence is DPKTILQEYL…AAQVLELLNK (71 aa).

Belongs to the ribonuclease III family. As to quaternary structure, homodimer. Requires Mg(2+) as cofactor.

It localises to the cytoplasm. It carries out the reaction Endonucleolytic cleavage to 5'-phosphomonoester.. In terms of biological role, digests double-stranded RNA. Involved in the processing of primary rRNA transcript to yield the immediate precursors to the large and small rRNAs (23S and 16S). Processes some mRNAs, and tRNAs when they are encoded in the rRNA operon. Processes pre-crRNA and tracrRNA of type II CRISPR loci if present in the organism. The chain is Ribonuclease 3 from Shewanella frigidimarina (strain NCIMB 400).